The following is a 1129-amino-acid chain: Ubiquitin carboxyl-terminal hydrolase 7 (1129 aa).

The MATH domain maps to 29–169 (EGHLALDIER…DDVIRLRCRF (141 aa)). One can recognise a USP domain in the interval 190–500 (IGLRNQGATC…SAYMLVYVRD (311 aa)). C199 (nucleophile) is an active-site residue. Residue H439 is the Proton acceptor of the active site.

The protein belongs to the peptidase C19 family.

It localises to the nucleus. The enzyme catalyses Thiol-dependent hydrolysis of ester, thioester, amide, peptide and isopeptide bonds formed by the C-terminal Gly of ubiquitin (a 76-residue protein attached to proteins as an intracellular targeting signal).. Functionally, hydrolase that deubiquitinates target proteins. This chain is Ubiquitin carboxyl-terminal hydrolase 7, found in Caenorhabditis briggsae.